Consider the following 264-residue polypeptide: 3-methyl-2-oxobutanoate hydroxymethyltransferase (264 aa).

2 residues coordinate Mg(2+): Asp45 and Asp84. 3-methyl-2-oxobutanoate contacts are provided by residues 45–46 (DS), Asp84, and Lys112. Glu114 is a binding site for Mg(2+). Catalysis depends on Glu181, which acts as the Proton acceptor.

The protein belongs to the PanB family. In terms of assembly, homodecamer; pentamer of dimers. It depends on Mg(2+) as a cofactor.

Its subcellular location is the cytoplasm. It carries out the reaction 3-methyl-2-oxobutanoate + (6R)-5,10-methylene-5,6,7,8-tetrahydrofolate + H2O = 2-dehydropantoate + (6S)-5,6,7,8-tetrahydrofolate. The protein operates within cofactor biosynthesis; (R)-pantothenate biosynthesis; (R)-pantoate from 3-methyl-2-oxobutanoate: step 1/2. Functionally, catalyzes the reversible reaction in which hydroxymethyl group from 5,10-methylenetetrahydrofolate is transferred onto alpha-ketoisovalerate to form ketopantoate. The sequence is that of 3-methyl-2-oxobutanoate hydroxymethyltransferase from Psychromonas ingrahamii (strain DSM 17664 / CCUG 51855 / 37).